The sequence spans 753 residues: LON peptidase N-terminal domain and RING finger protein 3 (753 aa).

The segment at 17-57 (GSNNLELAEPEEPGTSAAAGQSAAHPEEVTPEGSQALGAQE) is disordered. The TPR 1 repeat unit spans residues 72 to 105 (CKVLLTQADALASEGHLREALEVYRQLSERQQLV). The RING-type 1 zinc-finger motif lies at 159-197 (CKKCHGFLSDPVSLWCGHTFCKLCLERGRAADRRCALCG). TPR repeat units lie at residues 244 to 277 (ASQL…APND), 279 to 311 (LLYS…RPMG), and 313 to 345 (KAHF…DGKN). Positions 351–450 (EAQRENLELP…QGAKPDLSNP (100 aa)) are disordered. Residues 363–382 (SNQEGAAAAEESSSLANSAQ) show a composition bias toward low complexity. Residues 386–413 (SSKEDRKKDQEGEDRDAASVRTGKCQEK) are compositionally biased toward basic and acidic residues. The RING-type 2 zinc finger occupies 461-499 (CSLCMRLFYEPVTTPCGHTFCLKCLERCLDHNAKCPLCK). Residues 540 to 749 (MEELSNLNKN…GIRRILAFIS (210 aa)) enclose the Lon N-terminal domain.

This chain is LON peptidase N-terminal domain and RING finger protein 3 (Lonrf3), found in Mus musculus (Mouse).